Here is a 530-residue protein sequence, read N- to C-terminus: uncharacterized protein (530 aa).

The stretch at 485-529 forms a coiled coil; sequence SKEENREIKLSIRENKEKQRKKSVEKSVSKLQNQLNRLLNKNTIE.

This is an uncharacterized protein from Acanthamoeba polyphaga (Amoeba).